A 342-amino-acid polypeptide reads, in one-letter code: L-threonine 3-dehydrogenase (342 aa).

C38 is a binding site for Zn(2+). Catalysis depends on charge relay system residues T40 and H43. Residues H63, E64, C93, C96, C99, and C107 each contribute to the Zn(2+) site. NAD(+) is bound by residues I175, D195, R200, 262 to 264, and 286 to 287; these read LGL and IY.

This sequence belongs to the zinc-containing alcohol dehydrogenase family. As to quaternary structure, homotetramer. Zn(2+) is required as a cofactor.

The protein localises to the cytoplasm. It carries out the reaction L-threonine + NAD(+) = (2S)-2-amino-3-oxobutanoate + NADH + H(+). It functions in the pathway amino-acid degradation; L-threonine degradation via oxydo-reductase pathway; glycine from L-threonine: step 1/2. In terms of biological role, catalyzes the NAD(+)-dependent oxidation of L-threonine to 2-amino-3-ketobutyrate. The chain is L-threonine 3-dehydrogenase from Streptomyces coelicolor (strain ATCC BAA-471 / A3(2) / M145).